The following is a 172-amino-acid chain: Peptide deformylase (172 aa).

2 residues coordinate Fe cation: Cys92 and His134. Glu135 is an active-site residue. His138 is a Fe cation binding site.

This sequence belongs to the polypeptide deformylase family. It depends on Fe(2+) as a cofactor.

It catalyses the reaction N-terminal N-formyl-L-methionyl-[peptide] + H2O = N-terminal L-methionyl-[peptide] + formate. In terms of biological role, removes the formyl group from the N-terminal Met of newly synthesized proteins. Requires at least a dipeptide for an efficient rate of reaction. N-terminal L-methionine is a prerequisite for activity but the enzyme has broad specificity at other positions. In Saccharophagus degradans (strain 2-40 / ATCC 43961 / DSM 17024), this protein is Peptide deformylase.